A 634-amino-acid chain; its full sequence is ATP-dependent clpX-like chaperone, mitochondrial (634 aa).

Residues 1 to 56 (MSSCGACTCGAAAARLLTTSLTSAQRGISCGRIHVPVLGRLGTTLDAQALRRAPLR) constitute a mitochondrion transit peptide. Residues 69-102 (DGANKDGSGDGNKKSVTEGSSKKSGSGNSGKGGN) form a disordered region. Residues 70–84 (GANKDGSGDGNKKSV) show a composition bias toward basic and acidic residues. Positions 85–94 (TEGSSKKSGS) are enriched in low complexity. One can recognise a ClpX-type ZB domain in the interval 94 to 147 (SGNSGKGGNQLRCPKCGDLCTHVETFVSSTRFVKCEKCHHFFVVLSEADSKKSI). Zn(2+) is bound by residues C106, C109, C128, and C131. 295–302 (PTGSGKTL) contacts ATP. An N6-acetyllysine modification is found at K438. Over residues 599–611 (KEPGYIRAPSKES) the composition is skewed to basic and acidic residues. Residues 599–634 (KEPGYIRAPSKESSEEEYDSGVEEDGWPRQADAANS) are disordered. Residues 612–623 (SEEEYDSGVEED) are compositionally biased toward acidic residues. S618 is subject to Phosphoserine.

This sequence belongs to the ClpX chaperone family. In terms of assembly, homohexamer that forms a ring structure; this hexamerization requires ATP binding. Component of the ClpXP complex formed by the assembly of two CLPP heptameric rings with two CLPX hexameric rings, giving rise to a symmetrical structure with two central CLPP rings flanked by a CLPX ring at either end of the complex. Interacts with TFAM. As to expression, detected in liver (at protein level).

It is found in the mitochondrion. It localises to the mitochondrion matrix. The protein localises to the mitochondrion nucleoid. It carries out the reaction ATP + H2O = ADP + phosphate + H(+). Its function is as follows. ATP-dependent chaperone that functions as an unfoldase. As part of the ClpXP protease complex, it recognizes specific protein substrates, unfolds them using energy derived from ATP hydrolysis, and then translocates them to the proteolytic subunit (CLPP) of the ClpXP complex for degradation. Thanks to its chaperone activity, it also functions in the incorporation of the pyridoxal phosphate cofactor into 5-aminolevulinate synthase, thereby activating 5-aminolevulinate (ALA) synthesis, the first step in heme biosynthesis. This chaperone is also involved in the control of mtDNA nucleoid distribution, by regulating mitochondrial transcription factor A (TFAM) activity. The sequence is that of ATP-dependent clpX-like chaperone, mitochondrial from Mus musculus (Mouse).